The following is a 278-amino-acid chain: Indole-3-glycerol phosphate synthase (278 aa).

This sequence belongs to the TrpC family.

The catalysed reaction is 1-(2-carboxyphenylamino)-1-deoxy-D-ribulose 5-phosphate + H(+) = (1S,2R)-1-C-(indol-3-yl)glycerol 3-phosphate + CO2 + H2O. The protein operates within amino-acid biosynthesis; L-tryptophan biosynthesis; L-tryptophan from chorismate: step 4/5. This Pseudomonas aeruginosa (strain UCBPP-PA14) protein is Indole-3-glycerol phosphate synthase.